The sequence spans 430 residues: Probable carboxypeptidase AO090003000058 (430 aa).

The N-terminal stretch at 1 to 16 is a signal peptide; it reads MKSIYSLVLCTALTAA. N-linked (GlcNAc...) asparagine glycosylation occurs at Asn84. Residue Asp156 participates in Zn(2+) binding. Catalysis depends on Glu188, which acts as the Proton acceptor. Glu189 contacts Zn(2+). A glycan (N-linked (GlcNAc...) asparagine) is linked at Asn285.

It belongs to the peptidase M20A family. Zn(2+) is required as a cofactor.

Its subcellular location is the secreted. The protein is Probable carboxypeptidase AO090003000058 of Aspergillus oryzae (strain ATCC 42149 / RIB 40) (Yellow koji mold).